The primary structure comprises 252 residues: 3-dehydroquinate dehydratase (252 aa).

3-dehydroquinate-binding positions include Ser-21, 46–48, and Arg-82; that span reads EWR. The active-site Proton donor/acceptor is His-143. The active-site Schiff-base intermediate with substrate is Lys-170. 3-dehydroquinate is bound by residues Arg-213, Ser-232, and Gln-236.

The protein belongs to the type-I 3-dehydroquinase family. In terms of assembly, homodimer.

The enzyme catalyses 3-dehydroquinate = 3-dehydroshikimate + H2O. It participates in metabolic intermediate biosynthesis; chorismate biosynthesis; chorismate from D-erythrose 4-phosphate and phosphoenolpyruvate: step 3/7. Its function is as follows. Involved in the third step of the chorismate pathway, which leads to the biosynthesis of aromatic amino acids. Catalyzes the cis-dehydration of 3-dehydroquinate (DHQ) and introduces the first double bond of the aromatic ring to yield 3-dehydroshikimate. The protein is 3-dehydroquinate dehydratase of Escherichia coli O127:H6 (strain E2348/69 / EPEC).